The following is a 288-amino-acid chain: Protoheme IX farnesyltransferase (288 aa).

Transmembrane regions (helical) follow at residues 8 to 28 (ATKP…FLLA), 35 to 55 (YLIF…GCVL), 80 to 100 (ISIL…IYLL), 107 to 127 (LTML…TKCM), 132 to 152 (IYST…GYCA), 162 to 182 (LLLL…IAIL), 208 to 228 (IVIY…SGYT), 229 to 249 (TSYQ…YLAL), and 266 to 286 (FIFS…DSIF).

Belongs to the UbiA prenyltransferase family. Protoheme IX farnesyltransferase subfamily.

Its subcellular location is the cell membrane. The enzyme catalyses heme b + (2E,6E)-farnesyl diphosphate + H2O = Fe(II)-heme o + diphosphate. It participates in porphyrin-containing compound metabolism; heme O biosynthesis; heme O from protoheme: step 1/1. Functionally, converts heme B (protoheme IX) to heme O by substitution of the vinyl group on carbon 2 of heme B porphyrin ring with a hydroxyethyl farnesyl side group. The sequence is that of Protoheme IX farnesyltransferase from Baumannia cicadellinicola subsp. Homalodisca coagulata.